The chain runs to 304 residues: MMTEQLLAGLYEGIAKEAVLINEPLKNHTYTKMGGLADLFLIPSTYEETAFAVRYAYEHDLPLTMLGNGSNLVVRDGGIRGIVLSFEKLTDISVEGHELIAQSGAAIIQASRIAYDHALSGLEFACGIPGTIGGALIMNAGAYGGEVKDCLHSATVLTRKGELLNISHEELELGYRTSCFSKKEYIILEGRFSLTEGDPALIKEMMDDLTHKRETKQPLEYPSCGSVFKRPEGYFAGKLIQDSGLQGARIGGAEVSQKHAGFIVNIKDATATDYISLIRHVQETVQEKFGILLEPEVKIIGEEA.

In terms of domain architecture, FAD-binding PCMH-type spans 33-212 (MGGLADLFLI…KEMMDDLTHK (180 aa)). The active site involves arginine 176. Serine 226 acts as the Proton donor in catalysis. Glutamate 296 is an active-site residue.

It belongs to the MurB family. FAD serves as cofactor.

The protein localises to the cytoplasm. It catalyses the reaction UDP-N-acetyl-alpha-D-muramate + NADP(+) = UDP-N-acetyl-3-O-(1-carboxyvinyl)-alpha-D-glucosamine + NADPH + H(+). The protein operates within cell wall biogenesis; peptidoglycan biosynthesis. In terms of biological role, cell wall formation. The chain is UDP-N-acetylenolpyruvoylglucosamine reductase from Exiguobacterium sibiricum (strain DSM 17290 / CCUG 55495 / CIP 109462 / JCM 13490 / 255-15).